A 479-amino-acid chain; its full sequence is NADH-quinone oxidoreductase subunit N 2 (479 aa).

Transmembrane regions (helical) follow at residues 9–29, 40–60, 75–95, 110–130, 131–151, 164–184, 206–226, 238–258, 272–292, 299–319, 326–346, 371–391, 404–424, and 449–469; these read WALASVPEIIVVTGACVLLIV, LLLWASVAIVLLAAVATLMLA, RFAVFFKLVFYLATILTFFLS, YVLLLFALVGMMIMASAIDLL, SIYVGLELMVLCTYVLTGFLR, VILGAVSTAIFLYGVSLIYGL, LLLAVVFIVAGLVFKIGAVPF, PTTITAFMSVAPKAAGFAVIL, WIIVAAIAVATMALGSFVALV, LLAYSSIAHAGFAIFGVVAGG, VMLYLLIYTFMNLGIFGAVIM, ALLMLLYLFSLAGIPPTAGFF, GFVALAVIAVLLSVVSAYFYI, and ATLAFTAAGTIGIGLFPAWFL.

This sequence belongs to the complex I subunit 2 family. NDH-1 is composed of 14 different subunits. Subunits NuoA, H, J, K, L, M, N constitute the membrane sector of the complex.

It is found in the cell inner membrane. The catalysed reaction is a quinone + NADH + 5 H(+)(in) = a quinol + NAD(+) + 4 H(+)(out). In terms of biological role, NDH-1 shuttles electrons from NADH, via FMN and iron-sulfur (Fe-S) centers, to quinones in the respiratory chain. The immediate electron acceptor for the enzyme in this species is believed to be ubiquinone. Couples the redox reaction to proton translocation (for every two electrons transferred, four hydrogen ions are translocated across the cytoplasmic membrane), and thus conserves the redox energy in a proton gradient. The protein is NADH-quinone oxidoreductase subunit N 2 of Rhizobium meliloti (strain 1021) (Ensifer meliloti).